The chain runs to 95 residues: Co-chaperonin GroES (95 aa).

Belongs to the GroES chaperonin family. Heptamer of 7 subunits arranged in a ring. Interacts with the chaperonin GroEL.

It localises to the cytoplasm. Its function is as follows. Together with the chaperonin GroEL, plays an essential role in assisting protein folding. The GroEL-GroES system forms a nano-cage that allows encapsulation of the non-native substrate proteins and provides a physical environment optimized to promote and accelerate protein folding. GroES binds to the apical surface of the GroEL ring, thereby capping the opening of the GroEL channel. The sequence is that of Co-chaperonin GroES from Dichelobacter nodosus (strain VCS1703A).